A 430-amino-acid chain; its full sequence is NEDD8-activating enzyme E1 catalytic subunit (430 aa).

Residue 52 to 76 coordinates ATP; the sequence is GLGCELLKNLALSGFRTIEVIDMDT. Cys-211 serves as the catalytic Glycyl thioester intermediate.

Belongs to the ubiquitin-activating E1 family. UBA3 subfamily. As to quaternary structure, heterodimer of uba-3 and ula-1. Interacts with NEDD8 and ubc-12. In terms of tissue distribution, expressed in intestine, vulva epithelium and head and tail neurons.

The protein localises to the nucleus. It is found in the cytoplasm. It carries out the reaction ATP + [NEDD8 protein] + [E1 NEDD8-activating enzyme]-L-cysteine = AMP + diphosphate + [E1 NEDD8-activating enzyme]-S-[NEDD8 protein]-yl-L-cysteine.. It functions in the pathway protein modification; protein neddylation. Catalytic subunit of the dimeric rfl-1 (uba-3)-ula-1 E1 enzyme. E1 activates NEDD8 by first adenylating its C-terminal glycine residue with ATP, thereafter linking this residue to the side chain of the catalytic cysteine, yielding a NEDD8-uba-3 thioester and free AMP. E1 finally transfers NEDD8 to the catalytic cysteine of ubc-12. Required for cytokinesis and mitotic spindle orientation during early embryogenesis. The chain is NEDD8-activating enzyme E1 catalytic subunit from Caenorhabditis elegans.